Consider the following 305-residue polypeptide: Alpha-N-acetylgalactosaminide alpha-2,6-sialyltransferase 3 (305 aa).

The Cytoplasmic portion of the chain corresponds to methionine 1–lysine 8. A helical; Signal-anchor for type II membrane protein transmembrane segment spans residues proline 9–asparagine 29. The Lumenal segment spans residues aspartate 30 to serine 305. The cysteines at positions 80 and 229 are disulfide-linked. N-linked (GlcNAc...) asparagine glycosylation is found at asparagine 239 and asparagine 301.

The protein belongs to the glycosyltransferase 29 family. In terms of tissue distribution, in adults it is highly expressed in spleen, followed by kidney and lesser in lung. Not found in liver and skeletal muscle. In newborns it is abundantly expressed in brain and kidney.

Its subcellular location is the golgi apparatus membrane. It carries out the reaction an alpha-Neu5Ac-(2-&gt;3)-beta-D-Gal-(1-&gt;3)-D-GlcNAc derivative + CMP-N-acetyl-beta-neuraminate = an alpha-Neu5Ac-(2-&gt;3)-beta-D-Gal-(1-&gt;3)-[alpha-Neu5Ac-(2-&gt;6)]-D-GlcNAc derivative + CMP + H(+). The catalysed reaction is a ganglioside GM1b + CMP-N-acetyl-beta-neuraminate = a ganglioside GD1alpha + CMP + H(+). The enzyme catalyses a ganglioside GM1b (d18:1(4E)) + CMP-N-acetyl-beta-neuraminate = a ganglioside GD1alpha (d18:1(4E)) + CMP + H(+). It catalyses the reaction a globoside MSGG + CMP-N-acetyl-beta-neuraminate = a globoside DSGG + CMP + H(+). It carries out the reaction 3-O-[alpha-Neu5Ac-(2-&gt;3)-beta-D-Gal-(1-&gt;3)-alpha-D-GalNAc]-L-Ser-[protein] + CMP-N-acetyl-beta-neuraminate = a 3-O-{alpha-Neu5Ac-(2-&gt;3)-beta-D-Gal-(1-&gt;3)-[alpha-Neu5Ac-(2-&gt;6)]-alpha-D-GalNAc}-L-seryl-[protein] + CMP + H(+). The catalysed reaction is 3-O-[alpha-Neu5Ac-(2-&gt;3)-beta-D-Gal-(1-&gt;3)-alpha-D-GalNAc]-L-Thr-[protein] + CMP-N-acetyl-beta-neuraminate = a 3-O-{alpha-Neu5Ac-(2-&gt;3)-beta-D-Gal-(1-&gt;3)-[alpha-Neu5Ac-(2-&gt;6)]-alpha-D-GalNAc}-L-threonyl-[protein] + CMP + H(+). The protein operates within protein modification; protein glycosylation. Its pathway is glycolipid biosynthesis. Functionally, transfers the sialyl group (N-acetyl-alpha-neuraminyl or NeuAc) from CMP-NeuAc to the GalNAc residue on the NeuAc-alpha-2,3-Gal-beta-1,3-GalNAc sequence of glycoproteins and glycolipids forming an alpha-2,6-linkage. Produces branched type disialyl structures by transfer of a sialyl group onto a GalNAc residue inside the backbone core chains. ST6GalNAcIII prefers glycolipids to glycoproteins, predominantly catalyzing the biosynthesis of ganglioside GD1alpha from GM1b. GD1alpha is a critical molecule in the communication and interaction between neuronal cells and their supportive cells, particularly in brain tissues, and functions as an adhesion molecule in the process of metastasis. Sialylation of glycoproteins or glycosphingolipids is very important in tumor development, neuronal development, nerve repair, immunological processes and regulation of hormone sensitivity. This Rattus norvegicus (Rat) protein is Alpha-N-acetylgalactosaminide alpha-2,6-sialyltransferase 3 (St6galnac3).